Consider the following 852-residue polypeptide: Probable nitrite reductase-hydroxylamine oxidoreductase fusion protein (852 aa).

Residues 1–27 (MLNKSAALVPVVLAFLFLFLCFQCLYA) form the signal peptide. The nitrite reductase domain stretch occupies residues 28–327 (DIRCLTGKDG…DEGRKTLSAP (300 aa)). 2 consecutive Plastocyanin-like domains span residues 72–169 (VPGP…IVEP) and 217–307 (GETW…VEEG). Cu cation contacts are provided by His-102 and His-145. The interval 328 to 827 (GQDRQPPTLE…ISWWWGTAQG (500 aa)) is hydroxylamine oxidoreductase domain. Heme is bound by residues Cys-406, Cys-409, His-410, His-426, Cys-463, Cys-466, His-467, His-471, Cys-483, Cys-486, His-487, His-505, His-537, Cys-543, Cys-546, His-547, His-550, Cys-563, Cys-566, His-567, Cys-614, Cys-617, His-618, Cys-686, Cys-689, His-690, and His-813.

In the N-terminal section; belongs to the multicopper oxidase family. Requires Cu cation as cofactor. Heme is required as a cofactor.

Its subcellular location is the encapsulin nanocompartment. The catalysed reaction is hydroxylamine + 4 Fe(III)-[cytochrome c] + H2O = 4 Fe(II)-[cytochrome c] + nitrite + 5 H(+). It carries out the reaction nitric oxide + Fe(III)-[cytochrome c] + H2O = Fe(II)-[cytochrome c] + nitrite + 2 H(+). Its function is as follows. A nitrite reductase-hydroxylamine oxidoreductase protein that probably functions in the type 1 encapsulin nanocompartment. Probably involved in reductive catalysis. Targeted to the encapsulin nanocompartment by association with the diheme domain of the encapsulin shell protein (AC Q1Q6L7). Catalyzes the reduction of nitrite to nitric oxide (NO). Catalyzes the oxidation of hydroxylamine to nitrite. The chain is Probable nitrite reductase-hydroxylamine oxidoreductase fusion protein from Kuenenia stuttgartiensis.